The sequence spans 336 residues: Glyceraldehyde-3-phosphate dehydrogenase (336 aa).

NAD(+) is bound by residues 12–13 (RI), aspartate 34, and methionine 79. D-glyceraldehyde 3-phosphate is bound by residues 150–152 (SCT), threonine 181, 210–211 (TG), and arginine 233. Residue cysteine 151 is the Nucleophile of the active site. Residue asparagine 316 coordinates NAD(+).

This sequence belongs to the glyceraldehyde-3-phosphate dehydrogenase family. In terms of assembly, homotetramer.

The protein localises to the cytoplasm. The catalysed reaction is D-glyceraldehyde 3-phosphate + phosphate + NAD(+) = (2R)-3-phospho-glyceroyl phosphate + NADH + H(+). The protein operates within carbohydrate degradation; glycolysis; pyruvate from D-glyceraldehyde 3-phosphate: step 1/5. The protein is Glyceraldehyde-3-phosphate dehydrogenase of Echinococcus multilocularis (Fox tapeworm).